Consider the following 528-residue polypeptide: Arginine--tRNA ligase (528 aa).

A 'HIGH' region motif is present at residues Ala-112–His-122.

It belongs to the class-I aminoacyl-tRNA synthetase family. Monomer.

It is found in the cytoplasm. It catalyses the reaction tRNA(Arg) + L-arginine + ATP = L-arginyl-tRNA(Arg) + AMP + diphosphate. The sequence is that of Arginine--tRNA ligase from Wolinella succinogenes (strain ATCC 29543 / DSM 1740 / CCUG 13145 / JCM 31913 / LMG 7466 / NCTC 11488 / FDC 602W) (Vibrio succinogenes).